The chain runs to 396 residues: 1-deoxy-D-xylulose 5-phosphate reductoisomerase (396 aa).

The NADPH site is built by Thr13, Gly14, Ser15, Ile16, and Asn127. Residue Lys128 participates in 1-deoxy-D-xylulose 5-phosphate binding. Glu129 contributes to the NADPH binding site. Asp153 is a binding site for Mn(2+). 1-deoxy-D-xylulose 5-phosphate is bound by residues Ser154, Glu155, Ser184, and His207. Glu155 is a binding site for Mn(2+). Gly213 provides a ligand contact to NADPH. Residues Ser220, Asn225, Lys226, and Glu229 each contribute to the 1-deoxy-D-xylulose 5-phosphate site. Position 229 (Glu229) interacts with Mn(2+).

The protein belongs to the DXR family. It depends on Mg(2+) as a cofactor. Requires Mn(2+) as cofactor.

It carries out the reaction 2-C-methyl-D-erythritol 4-phosphate + NADP(+) = 1-deoxy-D-xylulose 5-phosphate + NADPH + H(+). The protein operates within isoprenoid biosynthesis; isopentenyl diphosphate biosynthesis via DXP pathway; isopentenyl diphosphate from 1-deoxy-D-xylulose 5-phosphate: step 1/6. Catalyzes the NADPH-dependent rearrangement and reduction of 1-deoxy-D-xylulose-5-phosphate (DXP) to 2-C-methyl-D-erythritol 4-phosphate (MEP). In Pseudomonas savastanoi pv. phaseolicola (strain 1448A / Race 6) (Pseudomonas syringae pv. phaseolicola (strain 1448A / Race 6)), this protein is 1-deoxy-D-xylulose 5-phosphate reductoisomerase.